A 146-amino-acid chain; its full sequence is Interleukin-13 (146 aa).

The N-terminal stretch at 1–24 is a signal peptide; sequence MHPLLNPLLLALGLMALLLTTVIA. 4 N-linked (GlcNAc...) asparagine glycosylation sites follow: Asn-52, Asn-63, Asn-71, and Asn-86. 2 disulfides stabilise this stretch: Cys-62/Cys-90 and Cys-78/Cys-104.

This sequence belongs to the IL-4/IL-13 family. Interacts with IL13RA2.

It localises to the secreted. Cytokine that plays important roles in allergic inflammation and immune response to parasite infection. Synergizes with IL2 in regulating interferon-gamma synthesis. Stimulates B-cell proliferation, and activation of eosinophils, basophils, and mast cells. Plays an important role in controlling IL33 activity by modulating the production of transmembrane and soluble forms of interleukin-1 receptor-like 1/IL1RL1. Displays the capacity to antagonize Th1-driven proinflammatory immune response and downregulates synthesis of many proinflammatory cytokines including IL1, IL6, IL10, IL12 and TNF-alpha through a mechanism that partially involves suppression of NF-kappa-B. Also functions on nonhematopoietic cells, including endothelial cells where it induces vascular cell adhesion protein 1/VCAM1, which is important in the recruitment of eosinophils. Exerts its biological effects through its receptors which comprises the IL4R chain and the IL13RA1 chain, to activate JAK1 and TYK2, leading to the activation of STAT6. Aside from IL13RA1, another receptor IL13RA2 acts as a high affinity decoy for IL13 and mediates internalization and depletion of extracellular IL13. The chain is Interleukin-13 (IL13) from Homo sapiens (Human).